A 423-amino-acid chain; its full sequence is UPF0229 protein Pmen_4018 (423 aa).

Residues 65–108 (HHGRGGKQTIVHPGNKEFTAGERIPRPQGGGGGRGSGKASNSGE) are disordered.

It belongs to the UPF0229 family.

The polypeptide is UPF0229 protein Pmen_4018 (Ectopseudomonas mendocina (strain ymp) (Pseudomonas mendocina)).